The following is a 68-amino-acid chain: Large ribosomal subunit protein uL29 (68 aa).

This sequence belongs to the universal ribosomal protein uL29 family.

This Bradyrhizobium sp. (strain BTAi1 / ATCC BAA-1182) protein is Large ribosomal subunit protein uL29.